A 149-amino-acid chain; its full sequence is Transcriptional repressor NrdR (149 aa).

The segment at 3-34 (CPFCGFEESKVVDSRSTDDNTTIRRRRECLKC) is a zinc-finger region. The ATP-cone domain maps to 49–139 (ILVIKKDLTR…VYRQFKDIDT (91 aa)).

It belongs to the NrdR family. The cofactor is Zn(2+).

In terms of biological role, negatively regulates transcription of bacterial ribonucleotide reductase nrd genes and operons by binding to NrdR-boxes. The protein is Transcriptional repressor NrdR of Clostridium beijerinckii (strain ATCC 51743 / NCIMB 8052) (Clostridium acetobutylicum).